We begin with the raw amino-acid sequence, 215 residues long: Probable transaldolase (215 aa).

The active-site Schiff-base intermediate with substrate is Lys83.

It belongs to the transaldolase family. Type 3B subfamily.

It is found in the cytoplasm. It catalyses the reaction D-sedoheptulose 7-phosphate + D-glyceraldehyde 3-phosphate = D-erythrose 4-phosphate + beta-D-fructose 6-phosphate. The protein operates within carbohydrate degradation; pentose phosphate pathway; D-glyceraldehyde 3-phosphate and beta-D-fructose 6-phosphate from D-ribose 5-phosphate and D-xylulose 5-phosphate (non-oxidative stage): step 2/3. Its function is as follows. Transaldolase is important for the balance of metabolites in the pentose-phosphate pathway. The protein is Probable transaldolase of Anaeromyxobacter sp. (strain Fw109-5).